A 624-amino-acid chain; its full sequence is APC membrane recruitment protein 2 (624 aa).

2 disordered regions span residues 1–308 and 342–596; these read MDSH…PPSE and EDVG…IPVS. Over residues 74-91 the composition is skewed to basic and acidic residues; that stretch reads SGKKEDAGGGEAQGKDAP. The span at 101 to 111 shows a compositional bias: low complexity; it reads SASSSVAKSHS. Basic and acidic residues-rich tracts occupy residues 120–132 and 247–258; these read GRPE…ENAE and RRLEELCGERPD. 2 stretches are compositionally biased toward low complexity: residues 272 to 282 and 295 to 307; these read ITGDIPITTIP and AAAP…DPPS. Positions 406 to 416 are enriched in gly residues; the sequence is TGGGGGGGGGT. Residues 450–464 are compositionally biased toward basic and acidic residues; the sequence is NNKEEQKGREKEQHE. A compositionally biased stretch (polar residues) spans 535–549; that stretch reads PITTTCSLKTPSSTV.

Belongs to the Amer family.

It localises to the cell membrane. In terms of biological role, negative regulator of the canonical Wnt signaling pathway involved in neuroectodermal patterning. Acts by specifically binding phosphatidylinositol 4,5-bisphosphate (PtdIns(4,5)P2), translocating to the cell membrane and interacting with key regulators of the canonical Wnt signaling pathway, such as components of the beta-catenin destruction complex. The chain is APC membrane recruitment protein 2 (AMER2) from Gallus gallus (Chicken).